The sequence spans 483 residues: Membrane-bound lytic murein transglycosylase F (483 aa).

The first 18 residues, 1–18 (MKGLIARFIAGFALLLWA), serve as a signal peptide directing secretion. The non-LT domain stretch occupies residues 19-267 (WDMVFPWQQL…RIEEKYFNHL (249 aa)). Positions 269-483 (HFDYVDIQSY…SKESDSTLKE (215 aa)) are LT domain. E312 is a catalytic residue. Residues 458–483 (QQIQNNEEQPSVPQEISKESDSTLKE) form a disordered region. Residues 473–483 (ISKESDSTLKE) are compositionally biased toward basic and acidic residues.

The protein in the N-terminal section; belongs to the bacterial solute-binding protein 3 family. In the C-terminal section; belongs to the transglycosylase Slt family.

Its subcellular location is the cell outer membrane. It catalyses the reaction Exolytic cleavage of the (1-&gt;4)-beta-glycosidic linkage between N-acetylmuramic acid (MurNAc) and N-acetylglucosamine (GlcNAc) residues in peptidoglycan, from either the reducing or the non-reducing ends of the peptidoglycan chains, with concomitant formation of a 1,6-anhydrobond in the MurNAc residue.. In terms of biological role, murein-degrading enzyme that degrades murein glycan strands and insoluble, high-molecular weight murein sacculi, with the concomitant formation of a 1,6-anhydromuramoyl product. Lytic transglycosylases (LTs) play an integral role in the metabolism of the peptidoglycan (PG) sacculus. Their lytic action creates space within the PG sacculus to allow for its expansion as well as for the insertion of various structures such as secretion systems and flagella. The chain is Membrane-bound lytic murein transglycosylase F from Actinobacillus pleuropneumoniae serotype 5b (strain L20).